A 538-amino-acid chain; its full sequence is Anti-bacteriophage protein A (538 aa).

Interacts with AbpB.

Its function is as follows. Part of an antiviral system composed of AbpA and AbpB; when both are expressed from a plasmid they confer resistance to phages T2, T4, T7 and lambda but not RB32 or RB69. Resistance is temperature dependent, it can be seen at 30 degrees Celsius but not at 37 or 42 degrees Celsius. The system impairs phage but not bacterial DNA synthesis (shown for T4, T7 and lambda). Partially suppressed by mutations in T4 gene 41, a replicative helicase. The sequence is that of Anti-bacteriophage protein A from Escherichia coli (strain K12).